A 267-amino-acid chain; its full sequence is Phosphate import ATP-binding protein PstB (267 aa).

An ABC transporter domain is found at 21–262; it reads IAIRNLEFYY…PSKQQTEDYI (242 aa). 53-60 provides a ligand contact to ATP; that stretch reads GPSGCGKS.

The protein belongs to the ABC transporter superfamily. Phosphate importer (TC 3.A.1.7) family. In terms of assembly, the complex is composed of two ATP-binding proteins (PstB), two transmembrane proteins (PstC and PstA) and a solute-binding protein (PstS).

Its subcellular location is the cell inner membrane. The enzyme catalyses phosphate(out) + ATP + H2O = ADP + 2 phosphate(in) + H(+). Its function is as follows. Part of the ABC transporter complex PstSACB involved in phosphate import. Responsible for energy coupling to the transport system. The chain is Phosphate import ATP-binding protein PstB from Xylella fastidiosa (strain 9a5c).